The chain runs to 230 residues: Uracil-DNA glycosylase (230 aa).

Aspartate 70 serves as the catalytic Proton acceptor.

The protein belongs to the uracil-DNA glycosylase (UDG) superfamily. UNG family.

The protein resides in the cytoplasm. It catalyses the reaction Hydrolyzes single-stranded DNA or mismatched double-stranded DNA and polynucleotides, releasing free uracil.. Its function is as follows. Excises uracil residues from the DNA which can arise as a result of misincorporation of dUMP residues by DNA polymerase or due to deamination of cytosine. In Pseudomonas savastanoi pv. phaseolicola (strain 1448A / Race 6) (Pseudomonas syringae pv. phaseolicola (strain 1448A / Race 6)), this protein is Uracil-DNA glycosylase.